The primary structure comprises 418 residues: Thyroid hormone receptor alpha-A (418 aa).

The disordered stretch occupies residues Met-1–Ser-38. Positions Met-1 to Pro-60 are modulating. NR C4-type zinc fingers lie at residues Cys-61–Cys-81 and Cys-99–Cys-123. Positions Cys-61–Asp-135 form a DNA-binding region, nuclear receptor. Residues Glu-171–Asp-415 enclose the NR LBD domain.

It belongs to the nuclear hormone receptor family. NR1 subfamily. In terms of assembly, binds to thyroid hormone receptor element (TRE) weakly as homodimers and monomers, but binds TRE with much higher affinity as heterodimers with retinoid X receptors. Can bind DNA as a heterodimer with either rxra or rxrg.

It localises to the nucleus. In terms of biological role, high affinity receptor for triiodothyronine (T3). The protein is Thyroid hormone receptor alpha-A (thra-a) of Xenopus laevis (African clawed frog).